The sequence spans 210 residues: Large ribosomal subunit protein uL3 (210 aa).

The tract at residues 136 to 156 (THGTEKAHRSGGSIGNNTEPG) is disordered.

It belongs to the universal ribosomal protein uL3 family. Part of the 50S ribosomal subunit. Forms a cluster with proteins L14 and L19.

One of the primary rRNA binding proteins, it binds directly near the 3'-end of the 23S rRNA, where it nucleates assembly of the 50S subunit. The protein is Large ribosomal subunit protein uL3 of Solidesulfovibrio magneticus (strain ATCC 700980 / DSM 13731 / RS-1) (Desulfovibrio magneticus).